Consider the following 522-residue polypeptide: tRNA-2-methylthio-N(6)-dimethylallyladenosine synthase (522 aa).

Residues 1 to 26 are compositionally biased toward low complexity; sequence MSLTIPSPASGTSTSATTDTAPAAAP. A disordered region spans residues 1–27; that stretch reads MSLTIPSPASGTSTSATTDTAPAAAPQ. An MTTase N-terminal domain is found at 28–143; that stretch reads RTYQVRTFGC…LPALLDRARH (116 aa). [4Fe-4S] cluster is bound by residues Cys-37, Cys-72, Cys-106, Cys-180, Cys-184, and Cys-187. The Radical SAM core domain maps to 166 to 396; that stretch reads RDSVYSGWVS…TALQDRIAAE (231 aa). The region spanning 399-469 is the TRAM domain; sequence ARQLGRRVEV…AFHLVADPAS (71 aa). The segment at 481-522 is disordered; it reads GDAWDRSQADSCGAPVAGGGAGSNGGKGGVSLGMPALPVRRS. Over residues 496–511 the composition is skewed to gly residues; that stretch reads VAGGGAGSNGGKGGVS.

It belongs to the methylthiotransferase family. MiaB subfamily. As to quaternary structure, monomer. It depends on [4Fe-4S] cluster as a cofactor.

It localises to the cytoplasm. It carries out the reaction N(6)-dimethylallyladenosine(37) in tRNA + (sulfur carrier)-SH + AH2 + 2 S-adenosyl-L-methionine = 2-methylsulfanyl-N(6)-dimethylallyladenosine(37) in tRNA + (sulfur carrier)-H + 5'-deoxyadenosine + L-methionine + A + S-adenosyl-L-homocysteine + 2 H(+). Catalyzes the methylthiolation of N6-(dimethylallyl)adenosine (i(6)A), leading to the formation of 2-methylthio-N6-(dimethylallyl)adenosine (ms(2)i(6)A) at position 37 in tRNAs that read codons beginning with uridine. In Arthrobacter sp. (strain FB24), this protein is tRNA-2-methylthio-N(6)-dimethylallyladenosine synthase.